Reading from the N-terminus, the 248-residue chain is MSQKKQKIQVEQKVPENVAKKTQRDSKLRDAVAKRRTERLAANKTRRAQWEKTAQAYEAEYKAADKSLVDNLRKAKTEGGFYVPAEAKLILVVRIRGINTLNPQVRQTLRLLKLRQLHNAAFVRVNKATIEMIRKVEPYVTYGYPSRAVIKNLIYKRGYAKINGQRIPITNNNVIEQQLGKVGIHSVEDLIHEITTVGPHFKEANRFLWAFKLRGPRGGFIAKRKSFINQGDWGNREDLINDLVKRMI.

Residues Met-1–Lys-44 form a disordered region. A compositionally biased stretch (basic and acidic residues) spans Ile-8–Ala-41.

Belongs to the universal ribosomal protein uL30 family.

In terms of biological role, binds to G-rich structures in 28S rRNA and in mRNAs. Plays a regulatory role in the translation apparatus; inhibits cell-free translation of mRNAs. In Paramecium tetraurelia, this protein is Large ribosomal subunit protein uL30A (Rpl7-1).